The following is a 580-amino-acid chain: MCSGPKSNLCSSRTLTEIESRQKEEETMLLLEFAACDDLDSFKREVEEKGLDLDESGLWYCRRVGSKKMGLEERTPLMVAAMYGSIKVLTFIVSTGKSDVNRACGEERVTPLHCAVAGCSVNMIEVINVLLDASALVNSVDANGNQPLDVFVRVSRFVASPRRKAVELLLRGGGVGGLIDEAVEEEIKIVSKYPADASLPDINEGVYGSDEFRMYSFKVKPCSRAYSHDWTECAFVHPGENARRRDPRKYPYTCVPCPEFRKGSCPKGDSCEYAHGVFESWLHPAQYKTRLCKDETGCARKVCFFAHKREEMRPVNASTGSAVAQSPFSSLEMMPGLSPLAYSSGVSTPPVSPMANGVPSSPRNGGSWQNRVNTLTPPALQLNGGSRLKSTLSARDIDMEMEMELRLRGFGNNVEETFGSYVSSPSRNSQMGQNMNQHYPSSPVRQPPSQHGFESSAAAAVAVMKARSTAFAKRSLSFKPATQAAPQSNLSDWGSPNGKLEWGMKGEELNKMRRSVSFGIHGNNNNNAARDYRDEPDVSWVNSLVKDSTVVSERSFGMNERVRIMSWAEQMYREKEQTVV.

2 ANK repeats span residues 72–102 (EERT…DVNR) and 107–139 (ERVT…LVNS). 2 consecutive C3H1-type zinc fingers follow at residues 251–278 (PYTC…HGVF) and 286–310 (QYKT…HKRE). The segment at 421 to 451 (YVSSPSRNSQMGQNMNQHYPSSPVRQPPSQH) is disordered.

In terms of tissue distribution, expressed in roots and anthers.

Its subcellular location is the nucleus. In terms of biological role, involved in salt stress response. May positively modulate plant tolerance to salt stress. The chain is Zinc finger CCCH domain-containing protein 47 from Arabidopsis thaliana (Mouse-ear cress).